The primary structure comprises 389 residues: Lipopolysaccharide assembly protein B (389 aa).

The chain crosses the membrane as a helical span at residues 1 to 20 (MLELLFLLLPVAAAYGWYMG). Residues 21 to 389 (RRSAQQNKQD…IKPIRGLDGL (369 aa)) are Cytoplasmic-facing. TPR repeat units lie at residues 35–68 (LSRD…DTGT), 69–102 (VEAH…ASLT), 107–140 (LLAI…TDFR), 142–174 (GALQ…GKDK), 180–213 (AHFY…DKNS), 214–247 (ARVS…DREL), and 249–282 (SETL…NTGA). Residues Cys357, Cys360, Cys371, and Cys374 each coordinate Fe cation.

Belongs to the LapB family.

Its subcellular location is the cell inner membrane. In terms of biological role, modulates cellular lipopolysaccharide (LPS) levels by regulating LpxC, which is involved in lipid A biosynthesis. May act by modulating the proteolytic activity of FtsH towards LpxC. May also coordinate assembly of proteins involved in LPS synthesis at the plasma membrane. This is Lipopolysaccharide assembly protein B from Escherichia coli O157:H7.